Here is a 396-residue protein sequence, read N- to C-terminus: Flavohemoprotein (396 aa).

A Globin domain is found at 1–136; the sequence is MLDAQTIATV…LANVFIHREA (136 aa). A heme b-binding site is contributed by histidine 85. Active-site charge relay system residues include tyrosine 95 and glutamate 135. The segment at 147–396 is reductase; that stretch reads GGWEGTRPFR…YECFGPHKVL (250 aa). The region spanning 150 to 255 is the FAD-binding FR-type domain; sequence EGTRPFRIVA…AAPAGDFFMN (106 aa). Residues tyrosine 188 and 204-207 contribute to the FAD site; that span reads RQYS. An NADP(+)-binding site is contributed by 268–273; the sequence is GVGQTP. 389–392 is a binding site for FAD; sequence CFGP.

Belongs to the globin family. Two-domain flavohemoproteins subfamily. This sequence in the C-terminal section; belongs to the flavoprotein pyridine nucleotide cytochrome reductase family. It depends on heme b as a cofactor. FAD is required as a cofactor.

It carries out the reaction 2 nitric oxide + NADPH + 2 O2 = 2 nitrate + NADP(+) + H(+). The enzyme catalyses 2 nitric oxide + NADH + 2 O2 = 2 nitrate + NAD(+) + H(+). Functionally, is involved in NO detoxification in an aerobic process, termed nitric oxide dioxygenase (NOD) reaction that utilizes O(2) and NAD(P)H to convert NO to nitrate, which protects the bacterium from various noxious nitrogen compounds. Therefore, plays a central role in the inducible response to nitrosative stress. This is Flavohemoprotein from Salmonella typhi.